A 535-amino-acid chain; its full sequence is Thermosome subunit gamma (535 aa).

It belongs to the TCP-1 chaperonin family. In terms of assembly, forms a heterooligomeric complex of two stacked nine-membered rings; one of alpha and the other of beta subunits.

It is found in the cytoplasm. The catalysed reaction is ATP + H2O = ADP + phosphate + H(+). Molecular chaperone; binds unfolded polypeptides in vitro, and has a weak ATPase activity. The polypeptide is Thermosome subunit gamma (thsC) (Saccharolobus shibatae (strain ATCC 51178 / DSM 5389 / JCM 8931 / NBRC 15437 / B12) (Sulfolobus shibatae)).